The primary structure comprises 677 residues: UPF0652 protein (677 aa).

The B box-type; atypical zinc-finger motif lies at 38-84; it reads ETPGMCCECTDQPAEVVCLQCQDELCTVCSTSLHRRGSRRSHIFKNK. Residues Cys43, Cys46, Cys66, and His71 each coordinate Zn(2+). A compositionally biased stretch (basic and acidic residues) spans 91–111; that stretch reads YDELNKRDRQPPLHGKEDEKV. 2 disordered regions span residues 91-142 and 156-192; these read YDEL…NNNI and LNPL…IDED. Positions 113-126 are enriched in low complexity; that stretch reads NNNNNNNNTNNTNN. The span at 163 to 178 shows a compositional bias: polar residues; that stretch reads HTNQQRNGGGSNNHQI.

It belongs to the UPF0652 family.

This is UPF0652 protein from Dictyostelium discoideum (Social amoeba).